Consider the following 145-residue polypeptide: D-aminoacyl-tRNA deacylase (145 aa).

The short motif at 137-138 (GP) is the Gly-cisPro motif, important for rejection of L-amino acids element.

Belongs to the DTD family. In terms of assembly, homodimer.

The protein localises to the cytoplasm. It carries out the reaction glycyl-tRNA(Ala) + H2O = tRNA(Ala) + glycine + H(+). It catalyses the reaction a D-aminoacyl-tRNA + H2O = a tRNA + a D-alpha-amino acid + H(+). Its function is as follows. An aminoacyl-tRNA editing enzyme that deacylates mischarged D-aminoacyl-tRNAs. Also deacylates mischarged glycyl-tRNA(Ala), protecting cells against glycine mischarging by AlaRS. Acts via tRNA-based rather than protein-based catalysis; rejects L-amino acids rather than detecting D-amino acids in the active site. By recycling D-aminoacyl-tRNA to D-amino acids and free tRNA molecules, this enzyme counteracts the toxicity associated with the formation of D-aminoacyl-tRNA entities in vivo and helps enforce protein L-homochirality. The chain is D-aminoacyl-tRNA deacylase from Lactobacillus gasseri (strain ATCC 33323 / DSM 20243 / BCRC 14619 / CIP 102991 / JCM 1131 / KCTC 3163 / NCIMB 11718 / NCTC 13722 / AM63).